We begin with the raw amino-acid sequence, 64 residues long: MKNKTHKGTAKRVKVTGSGKLVREQANRRHLLEGKSSTRTRRLKGIVEVDKADTKRMKRLLGKA.

Basic residues predominate over residues 1–14 (MKNKTHKGTAKRVK). A disordered region spans residues 1–29 (MKNKTHKGTAKRVKVTGSGKLVREQANRR).

This sequence belongs to the bacterial ribosomal protein bL35 family.

This Corynebacterium glutamicum (strain R) protein is Large ribosomal subunit protein bL35.